A 237-amino-acid polypeptide reads, in one-letter code: Ribosomal RNA small subunit methyltransferase G (237 aa).

Residues glycine 78, phenylalanine 83, 129–130, and arginine 148 each bind S-adenosyl-L-methionine; that span reads AE. The disordered stretch occupies residues 216-237; the sequence is SKKKETPNKYPRKAGTPNKKPL.

Belongs to the methyltransferase superfamily. RNA methyltransferase RsmG family.

The protein localises to the cytoplasm. Functionally, specifically methylates the N7 position of a guanine in 16S rRNA. The protein is Ribosomal RNA small subunit methyltransferase G of Streptococcus agalactiae serotype III (strain NEM316).